We begin with the raw amino-acid sequence, 124 residues long: uncharacterized protein (124 aa).

The next 3 helical transmembrane spans lie at 13–33 (LIQI…VLQL), 43–63 (GLFW…PEFF), and 71–91 (GVGR…FYLI).

It to M.thermoautotrophicum MTH137.

It localises to the cell membrane. This is an uncharacterized protein from Methanocaldococcus jannaschii (strain ATCC 43067 / DSM 2661 / JAL-1 / JCM 10045 / NBRC 100440) (Methanococcus jannaschii).